Consider the following 427-residue polypeptide: Serine--tRNA ligase (427 aa).

Residue 231–233 (TAE) participates in L-serine binding. ATP contacts are provided by residues 262-264 (RRE) and Val-278. An L-serine-binding site is contributed by Glu-285. An ATP-binding site is contributed by 349 to 352 (EVSS). Ser-384 contributes to the L-serine binding site.

The protein belongs to the class-II aminoacyl-tRNA synthetase family. Type-1 seryl-tRNA synthetase subfamily. As to quaternary structure, homodimer. The tRNA molecule binds across the dimer.

The protein resides in the cytoplasm. The enzyme catalyses tRNA(Ser) + L-serine + ATP = L-seryl-tRNA(Ser) + AMP + diphosphate + H(+). It catalyses the reaction tRNA(Sec) + L-serine + ATP = L-seryl-tRNA(Sec) + AMP + diphosphate + H(+). It participates in aminoacyl-tRNA biosynthesis; selenocysteinyl-tRNA(Sec) biosynthesis; L-seryl-tRNA(Sec) from L-serine and tRNA(Sec): step 1/1. Its function is as follows. Catalyzes the attachment of serine to tRNA(Ser). Is also able to aminoacylate tRNA(Sec) with serine, to form the misacylated tRNA L-seryl-tRNA(Sec), which will be further converted into selenocysteinyl-tRNA(Sec). In Chlamydia pneumoniae (Chlamydophila pneumoniae), this protein is Serine--tRNA ligase.